A 626-amino-acid chain; its full sequence is ATP-dependent rRNA helicase spb4 (626 aa).

The Q motif signature appears at 14–42 (WDALTPSLAEWVLDAISSMGFEKMTPVQA). Positions 45-246 (IPLFMGNKDV…RVGLRNPVKI (202 aa)) constitute a Helicase ATP-binding domain. An ATP-binding site is contributed by 58–65 (AVTGSGKT). The short motif at 194 to 197 (DEAD) is the DEAD box element. Residues 279-437 (ALLSLLSQLE…TTGEAAKILI (159 aa)) enclose the Helicase C-terminal domain. Positions 553-599 (QREAWSQKHEKQDLKELKREKKKRKREIERLEKMTDEEKKEEQAKEK) are disordered. Composition is skewed to basic and acidic residues over residues 554–571 (REAW…ELKR) and 578–599 (REIE…AKEK). A coiled-coil region spans residues 558-620 (SQKHEKQDLK…RKIEDDADVE (63 aa)).

The protein belongs to the DEAD box helicase family. DDX55/SPB4 subfamily. As to quaternary structure, component of pre-60S ribosomal complexes.

The protein localises to the nucleus. It is found in the nucleolus. The enzyme catalyses ATP + H2O = ADP + phosphate + H(+). Functionally, ATP-binding RNA helicase involved in the biogenesis of 60S ribosomal subunits. Binds 90S pre-ribosomal particles and dissociates from pre-60S ribosomal particles after processing of 27SB pre-rRNA. Required for the normal formation of 18S rRNA through the processing of pre-rRNAs at sites A0, A1 and A2, and the normal formation of 25S and 5.8S rRNAs through the processing of pre-rRNAs at sites C1 and C2. This Botryotinia fuckeliana (strain B05.10) (Noble rot fungus) protein is ATP-dependent rRNA helicase spb4.